A 119-amino-acid polypeptide reads, in one-letter code: Beta-2-microglobulin (119 aa).

Residues 1 to 20 form the signal peptide; that stretch reads MARFVVAALLVLLCLSGLEA. In terms of domain architecture, Ig-like C1-type spans 25–114; the sequence is PKIQVYSRHP…VTFPTPKTVK (90 aa). A disulfide bond links Cys45 and Cys100.

This sequence belongs to the beta-2-microglobulin family. Heterodimer of an alpha chain and a beta chain. Beta-2-microglobulin is the beta-chain of major histocompatibility complex class I molecules.

The protein resides in the secreted. Functionally, component of the class I major histocompatibility complex (MHC). Involved in the presentation of peptide antigens to the immune system. This chain is Beta-2-microglobulin (B2M), found in Cebus albifrons (White-fronted capuchin).